Consider the following 358-residue polypeptide: Peptide chain release factor 1 (358 aa).

Residue Q233 is modified to N5-methylglutamine.

This sequence belongs to the prokaryotic/mitochondrial release factor family. Methylated by PrmC. Methylation increases the termination efficiency of RF1.

The protein resides in the cytoplasm. In terms of biological role, peptide chain release factor 1 directs the termination of translation in response to the peptide chain termination codons UAG and UAA. This is Peptide chain release factor 1 from Staphylococcus epidermidis (strain ATCC 35984 / DSM 28319 / BCRC 17069 / CCUG 31568 / BM 3577 / RP62A).